We begin with the raw amino-acid sequence, 329 residues long: GTP 3',8-cyclase (329 aa).

The region spanning 8–234 is the Radical SAM core domain; sequence AFARKFYYLR…QLRQRSDGPA (227 aa). A GTP-binding site is contributed by arginine 17. The [4Fe-4S] cluster site is built by cysteine 24 and cysteine 28. An S-adenosyl-L-methionine-binding site is contributed by tyrosine 30. [4Fe-4S] cluster is bound at residue cysteine 31. Arginine 68 provides a ligand contact to GTP. Glycine 72 is a binding site for S-adenosyl-L-methionine. Threonine 99 contacts GTP. S-adenosyl-L-methionine is bound at residue serine 123. A GTP-binding site is contributed by lysine 160. An S-adenosyl-L-methionine-binding site is contributed by methionine 194. Cysteine 257 and cysteine 260 together coordinate [4Fe-4S] cluster. 262-264 contributes to the GTP binding site; it reads RLR. Cysteine 274 contributes to the [4Fe-4S] cluster binding site.

It belongs to the radical SAM superfamily. MoaA family. Monomer and homodimer. It depends on [4Fe-4S] cluster as a cofactor.

The enzyme catalyses GTP + AH2 + S-adenosyl-L-methionine = (8S)-3',8-cyclo-7,8-dihydroguanosine 5'-triphosphate + 5'-deoxyadenosine + L-methionine + A + H(+). It participates in cofactor biosynthesis; molybdopterin biosynthesis. Functionally, catalyzes the cyclization of GTP to (8S)-3',8-cyclo-7,8-dihydroguanosine 5'-triphosphate. The protein is GTP 3',8-cyclase of Escherichia coli O45:K1 (strain S88 / ExPEC).